The following is a 652-amino-acid chain: Putative enzymatic polyprotein (652 aa).

In terms of domain architecture, Peptidase A2 spans 21 to 99; the sequence is YHGLFDTGAN…SPDIIIGATF (79 aa). D26 is an active-site residue. One can recognise a Reverse transcriptase domain in the interval 231–413; the sequence is FIEEKTNFED…EKIDFLGVQI (183 aa). Mg(2+)-binding residues include D301, D364, and D365.

The enzyme catalyses DNA(n) + a 2'-deoxyribonucleoside 5'-triphosphate = DNA(n+1) + diphosphate. The catalysed reaction is Endonucleolytic cleavage to 5'-phosphomonoester.. Encodes for at least two polypeptides: protease (PR) and reverse transcriptase (RT). The protease processes the polyprotein in cis. Reverse transcriptase is multifunctional enzyme that converts the viral RNA genome into dsDNA in viral cytoplasmic capsids. This enzyme displays a DNA polymerase activity that can copy either DNA or RNA templates, and a ribonuclease H (RNase H) activity that cleaves the RNA strand of RNA-DNA heteroduplexes in a partially processive 3'- to 5'-endonucleasic mode. Neo-synthesized pregenomic RNA (pgRNA) are encapsidated, and reverse-transcribed inside the nucleocapsid. Partial (+)DNA is synthesized from the (-)DNA template and generates the relaxed circular DNA (RC-DNA) genome. After budding and infection, the RC-DNA migrates in the nucleus, and is converted into a plasmid-like covalently closed circular DNA (cccDNA). The sequence is that of Putative enzymatic polyprotein from Cassava vein mosaic virus (CsVMV).